Reading from the N-terminus, the 1020-residue chain is 5'-3' exoribonuclease 3 (1020 aa).

Residues 113–144 (QQRSRRFRSAKDASDAAAEEERLREEFEREGR) are disordered. Over residues 121–144 (SAKDASDAAAEEERLREEFEREGR) the composition is skewed to basic and acidic residues. The CCHC-type zinc-finger motif lies at 262–279 (ERCFLCGQMGHFASNCEG). 2 disordered regions span residues 411–440 (QHQR…TVQP) and 452–483 (RLAS…PGSS). The span at 414 to 433 (RQAERVKRDKAGKATKRMDD) shows a compositional bias: basic and acidic residues. A coiled-coil region spans residues 487 to 523 (AIVDVENSLESDERENKEELKTKLKELIREKSDAFNS). Over residues 831–844 (NNHGMHNNHGMHNN) the composition is skewed to low complexity. 3 disordered regions span residues 831 to 859 (NNHG…GRHL), 875 to 897 (TDRY…PQYV), and 911 to 1020 (PGAQ…RHRY). Low complexity-rich tracts occupy residues 911 to 923 (PGAQ…APYQ) and 960 to 972 (GNHQ…QQWH). The segment covering 1000–1020 (RGRGRGSHHHHDQGGNPRHRY) has biased composition (basic residues).

The protein belongs to the 5'-3' exonuclease family. XRN2/RAT1 subfamily. Expressed in roots, leaves, stems and flowers.

It localises to the nucleus. Functionally, possesses 5'-&gt;3' exoribonuclease activity. Acts as an endogenous post-transcriptional gene silencing (PTGS) suppressor. Degrades miRNA-derived loops, excised during miRNA maturation in the nucleus. Required for proper development. Involved in pre-rRNA processing. Involved with XRN2 in the 5'-end exonucleolytic processing of 5.8S and 25S rRNAs. Contributes with XRN2 to polyadenylation-dependent nuclear RNA surveillance. Involved in the degradation of aberrant polyadenylated pre-rRNA through 5'-end processing. The polypeptide is 5'-3' exoribonuclease 3 (Arabidopsis thaliana (Mouse-ear cress)).